A 104-amino-acid chain; its full sequence is Flagellar hook-basal body complex protein FliE (104 aa).

It belongs to the FliE family.

Its subcellular location is the bacterial flagellum basal body. This chain is Flagellar hook-basal body complex protein FliE, found in Salmonella arizonae (strain ATCC BAA-731 / CDC346-86 / RSK2980).